A 241-amino-acid chain; its full sequence is Ribonuclease 3 (241 aa).

Residues 8–137 enclose the RNase III domain; that stretch reads LTLLKNRLGI…LLGAVYLDQG (130 aa). Glutamate 50 is a Mg(2+) binding site. Aspartate 54 is an active-site residue. Residues aspartate 123 and glutamate 126 each contribute to the Mg(2+) site. The active site involves glutamate 126. Residues 164–233 form the DRBM domain; the sequence is DYKTELQELV…AKKALMKSDL (70 aa). The interval 214-241 is disordered; that stretch reads RSKKEAEQQAAKKALMKSDLGSACNHKK.

The protein belongs to the ribonuclease III family. As to quaternary structure, homodimer. Mg(2+) serves as cofactor.

It localises to the cytoplasm. The enzyme catalyses Endonucleolytic cleavage to 5'-phosphomonoester.. Functionally, digests double-stranded RNA. Involved in the processing of primary rRNA transcript to yield the immediate precursors to the large and small rRNAs (23S and 16S). Processes some mRNAs, and tRNAs when they are encoded in the rRNA operon. Processes pre-crRNA and tracrRNA of type II CRISPR loci if present in the organism. The polypeptide is Ribonuclease 3 (Pelotomaculum thermopropionicum (strain DSM 13744 / JCM 10971 / SI)).